A 158-amino-acid chain; its full sequence is SKP1-like protein 18 (158 aa).

Residues 99 to 157 (ILAANYLNFEGLLGFASQTVADYIKDKTPEEVREIFNIENDFTPEEEEEIRKENAWTFN) are interaction with the F-box domain of F-box proteins.

The protein belongs to the SKP1 family. In terms of assembly, part of a SCF (SKP1-cullin-F-box) protein ligase complex. Interacts with CPR1/CPR30, EBF1, SKP2A, At3g61590, At4g38940 and At5g49610. Expressed in young seedlings, roots, leaves, floral stems, inflorescences, pollen, and siliques.

The protein resides in the nucleus. It participates in protein modification; protein ubiquitination. Its function is as follows. Involved in ubiquitination and subsequent proteasomal degradation of target proteins. Together with CUL1, RBX1 and a F-box protein, it forms a SCF E3 ubiquitin ligase complex. The functional specificity of this complex depends on the type of F-box protein. In the SCF complex, it serves as an adapter that links the F-box protein to CUL1. This Arabidopsis thaliana (Mouse-ear cress) protein is SKP1-like protein 18 (ASK18).